We begin with the raw amino-acid sequence, 388 residues long: Succinate--CoA ligase [ADP-forming] subunit beta (388 aa).

One can recognise an ATP-grasp domain in the interval 9-245; it reads KELLAGYGLP…KSQENERELK (237 aa). ATP is bound by residues lysine 46, 53–55, glutamate 100, tyrosine 103, and glutamate 108; that span reads GRG. Mg(2+) is bound by residues asparagine 200 and aspartate 214. Substrate is bound by residues asparagine 265 and 322–324; that span reads GIV.

Belongs to the succinate/malate CoA ligase beta subunit family. In terms of assembly, heterotetramer of two alpha and two beta subunits. It depends on Mg(2+) as a cofactor.

The catalysed reaction is succinate + ATP + CoA = succinyl-CoA + ADP + phosphate. It carries out the reaction GTP + succinate + CoA = succinyl-CoA + GDP + phosphate. Its pathway is carbohydrate metabolism; tricarboxylic acid cycle; succinate from succinyl-CoA (ligase route): step 1/1. Succinyl-CoA synthetase functions in the citric acid cycle (TCA), coupling the hydrolysis of succinyl-CoA to the synthesis of either ATP or GTP and thus represents the only step of substrate-level phosphorylation in the TCA. The beta subunit provides nucleotide specificity of the enzyme and binds the substrate succinate, while the binding sites for coenzyme A and phosphate are found in the alpha subunit. The chain is Succinate--CoA ligase [ADP-forming] subunit beta from Neisseria meningitidis serogroup C (strain 053442).